Consider the following 431-residue polypeptide: Serine--tRNA ligase (431 aa).

237-239 (TAE) contributes to the L-serine binding site. 268–270 (RSE) is a binding site for ATP. Glu-291 lines the L-serine pocket. Position 355–358 (355–358 (EISS)) interacts with ATP. Ser-390 contacts L-serine.

This sequence belongs to the class-II aminoacyl-tRNA synthetase family. Type-1 seryl-tRNA synthetase subfamily. Homodimer. The tRNA molecule binds across the dimer.

Its subcellular location is the cytoplasm. The catalysed reaction is tRNA(Ser) + L-serine + ATP = L-seryl-tRNA(Ser) + AMP + diphosphate + H(+). It carries out the reaction tRNA(Sec) + L-serine + ATP = L-seryl-tRNA(Sec) + AMP + diphosphate + H(+). It functions in the pathway aminoacyl-tRNA biosynthesis; selenocysteinyl-tRNA(Sec) biosynthesis; L-seryl-tRNA(Sec) from L-serine and tRNA(Sec): step 1/1. Its function is as follows. Catalyzes the attachment of serine to tRNA(Ser). Is also able to aminoacylate tRNA(Sec) with serine, to form the misacylated tRNA L-seryl-tRNA(Sec), which will be further converted into selenocysteinyl-tRNA(Sec). In Neisseria meningitidis serogroup A / serotype 4A (strain DSM 15465 / Z2491), this protein is Serine--tRNA ligase.